Consider the following 493-residue polypeptide: 3-octaprenyl-4-hydroxybenzoate carboxy-lyase (493 aa).

A Mn(2+)-binding site is contributed by N172. Prenylated FMN is bound by residues 175 to 177 (IYR), 189 to 191 (RWL), and 194 to 195 (RG). E238 is a binding site for Mn(2+). Residue D287 is the Proton donor of the active site.

Belongs to the UbiD family. As to quaternary structure, homohexamer. The cofactor is prenylated FMN. Mn(2+) serves as cofactor.

It localises to the cell membrane. It catalyses the reaction a 4-hydroxy-3-(all-trans-polyprenyl)benzoate + H(+) = a 2-(all-trans-polyprenyl)phenol + CO2. It functions in the pathway cofactor biosynthesis; ubiquinone biosynthesis. Functionally, catalyzes the decarboxylation of 3-octaprenyl-4-hydroxy benzoate to 2-octaprenylphenol, an intermediate step in ubiquinone biosynthesis. This chain is 3-octaprenyl-4-hydroxybenzoate carboxy-lyase, found in Shewanella piezotolerans (strain WP3 / JCM 13877).